We begin with the raw amino-acid sequence, 401 residues long: Imidazolonepropionase (401 aa).

2 residues coordinate Fe(3+): His70 and His72. Zn(2+) contacts are provided by His70 and His72. 4-imidazolone-5-propanoate contacts are provided by Arg79, Tyr142, and His175. Tyr142 contacts N-formimidoyl-L-glutamate. His238 is a Fe(3+) binding site. His238 is a binding site for Zn(2+). A 4-imidazolone-5-propanoate-binding site is contributed by Gln241. Asp313 contributes to the Fe(3+) binding site. A Zn(2+)-binding site is contributed by Asp313. Residues Asn315 and Gly317 each contribute to the N-formimidoyl-L-glutamate site. Residue Thr318 coordinates 4-imidazolone-5-propanoate.

It belongs to the metallo-dependent hydrolases superfamily. HutI family. Requires Zn(2+) as cofactor. Fe(3+) is required as a cofactor.

Its subcellular location is the cytoplasm. It carries out the reaction 4-imidazolone-5-propanoate + H2O = N-formimidoyl-L-glutamate. It participates in amino-acid degradation; L-histidine degradation into L-glutamate; N-formimidoyl-L-glutamate from L-histidine: step 3/3. Catalyzes the hydrolytic cleavage of the carbon-nitrogen bond in imidazolone-5-propanoate to yield N-formimidoyl-L-glutamate. It is the third step in the universal histidine degradation pathway. The protein is Imidazolonepropionase of Xanthomonas campestris pv. campestris (strain 8004).